Reading from the N-terminus, the 302-residue chain is Putative peptide permease protein BOV_A0350 (302 aa).

The interval 1-22 (MRSSIHASRLRKMGQSIPASTG) is disordered. The next 6 membrane-spanning stretches (helical) occupy residues 38–58 (IFGL…PLWL), 101–121 (LLVA…IGAI), 147–167 (IFLL…VVVI), 200–222 (AGLG…VVYA), 230–250 (ILLE…AASW), and 268–288 (WQWL…NFIG). An ABC transmembrane type-1 domain is found at 97–288 (GRISLLVAVS…LAVLAINFIG (192 aa)).

This sequence belongs to the binding-protein-dependent transport system permease family. As to quaternary structure, the complex is composed of two ATP-binding proteins (BOV_A0347 and BOV_A0348), two transmembrane proteins (BOV_A0350 and BOV_A0351) and a solute-binding protein (BOV_A0352).

It is found in the cell inner membrane. Probably part of an ABC transporter complex that could be involved in peptide import. Probably responsible for the translocation of the substrate across the membrane. The protein is Putative peptide permease protein BOV_A0350 of Brucella ovis (strain ATCC 25840 / 63/290 / NCTC 10512).